The chain runs to 73 residues: Putative membrane protein insertion efficiency factor (73 aa).

The protein belongs to the UPF0161 family.

The protein localises to the cell inner membrane. Its function is as follows. Could be involved in insertion of integral membrane proteins into the membrane. The polypeptide is Putative membrane protein insertion efficiency factor (Neisseria meningitidis serogroup C (strain 053442)).